A 275-amino-acid polypeptide reads, in one-letter code: NH(3)-dependent NAD(+) synthetase (275 aa).

Residue 46–53 (GISGGQDS) participates in ATP binding. Asp52 lines the Mg(2+) pocket. Arg140 lines the deamido-NAD(+) pocket. Residue Thr160 participates in ATP binding. Mg(2+) is bound at residue Glu165. Deamido-NAD(+) is bound by residues Lys173 and Asp180. ATP-binding residues include Lys189 and Thr211. 260–261 (HK) contacts deamido-NAD(+).

This sequence belongs to the NAD synthetase family. In terms of assembly, homodimer.

It carries out the reaction deamido-NAD(+) + NH4(+) + ATP = AMP + diphosphate + NAD(+) + H(+). The protein operates within cofactor biosynthesis; NAD(+) biosynthesis; NAD(+) from deamido-NAD(+) (ammonia route): step 1/1. Catalyzes the ATP-dependent amidation of deamido-NAD to form NAD. Uses ammonia as a nitrogen source. This is NH(3)-dependent NAD(+) synthetase from Erwinia tasmaniensis (strain DSM 17950 / CFBP 7177 / CIP 109463 / NCPPB 4357 / Et1/99).